The sequence spans 390 residues: Coiled-coil domain-containing protein 85C (390 aa).

Coiled coils occupy residues 26-86 (KEEL…RELC) and 116-146 (KEVG…KEII). The interval 153–237 (RNGPGSRSSI…RSIPNGLNDS (85 aa)) is disordered. The segment covering 157-172 (GSRSSIDSQNSLTNLN) has biased composition (polar residues). Over residues 182 to 194 (DGSSTSSTGSAGS) the composition is skewed to low complexity.

The protein belongs to the CCDC85 family.

The protein resides in the cell junction. The protein localises to the tight junction. It is found in the adherens junction. In terms of biological role, may play a role in cell-cell adhesion and epithelium development. May play an important role in cortical development, especially in the maintenance of radial glia. This Xenopus laevis (African clawed frog) protein is Coiled-coil domain-containing protein 85C (ccdc85c).